The chain runs to 520 residues: MLGKHSKIFFGVSLIFLVIAIVLASWGFQKIVNKQIQKNVQLANDSKMFERWVKLPMPLDFKVYVFNVTNVEEVNQGGKPILQEIGPYVYKQYREKTILGYGDNDTIKYMLKKHFEFDPEASGSLTEDDELTVVHFSYLAALLTVHDMMPSLVTVVNKALEQLFPSLEDAFLRVKVRDLFFDGIYLSCDGDNSALGLVCGKIRAEMPPTMRKAEGSNGFYFSMFSHMNRSESGPYEMIRGRDNVYELGNIVSYKGQENMPMWGDKYCGQINGSDSSIFPPIKEDDVPKKIYTFEPDICRSVYADLVDKRELFNISTYYYEISETAFAAKSANPNNRCFCKKNWSANHDGCLLMGLLNLTPCQGAPAIASLPHFYLGSEELLDYFQSGVQPDKEKHNTYVYIDPVTGVVLSGVKRLQFNIEMRQINNIPQLKSVPTGLFPMLWLEEGATIPESIQQELRDSHKLLGYVEVAKWFLLTIAIISVIASAVAVARANALLSWPRNSNSVSFILGPSVTQVNKGN.

The Cytoplasmic segment spans residues 1-7; it reads MLGKHSK. Residues 8–28 form a helical membrane-spanning segment; that stretch reads IFFGVSLIFLVIAIVLASWGF. The Extracellular segment spans residues 29–468; the sequence is QKIVNKQIQK…DSHKLLGYVE (440 aa). Asn-44, Asn-67, Asn-104, Asn-228, Asn-271, Asn-313, and Asn-342 each carry an N-linked (GlcNAc...) asparagine glycan. Intrachain disulfides connect Cys-267–Cys-337, Cys-298–Cys-361, and Cys-339–Cys-350. Residues 469 to 489 traverse the membrane as a helical segment; the sequence is VAKWFLLTIAIISVIASAVAV. At 490 to 520 the chain is on the cytoplasmic side; the sequence is ARANALLSWPRNSNSVSFILGPSVTQVNKGN.

It belongs to the CD36 family. As to expression, localizes to cells surrounding the sensory neurons in the antenna. Associate in a ratio of 2:1 with the neurons expressing the other subtype SNMP1.

It is found in the cell membrane. Its function is as follows. Plays an olfactory role that is not restricted to pheromone sensitivity. May play a role in the elimination of lipophilic components from the sensillum lymph. This is Sensory neuron membrane protein 2 from Heliothis virescens (Tobacco budworm moth).